The sequence spans 757 residues: Protein hunchback (757 aa).

Disordered stretches follow at residues E30 to S51 and E171 to K213. Residues S39–S51 are compositionally biased toward polar residues. The segment covering E197–K213 has biased composition (basic and acidic residues). 4 C2H2-type zinc fingers span residues Y239–H261, L268–H290, F296–H318, and Y324–H348. Disordered stretches follow at residues D367–S416, E511–K535, and M602–S694. 2 stretches are compositionally biased toward low complexity: residues V397–A414 and Q512–S521. The span at D522–E531 shows a compositional bias: acidic residues. A compositionally biased stretch (low complexity) spans A651–S694. 2 C2H2-type zinc fingers span residues Y704–H726 and F732–H756.

The protein belongs to the hunchback C2H2-type zinc-finger protein family.

The protein localises to the nucleus. Its function is as follows. Gap class segmentation protein that controls development of head structures. This is Protein hunchback (hb) from Drosophila sechellia (Fruit fly).